The chain runs to 68 residues: Small integral membrane protein 10-like protein 3 (68 aa).

In terms of tissue distribution, expressed specifically in salivary glands (at protein level).

This chain is Small integral membrane protein 10-like protein 3, found in Mus musculus (Mouse).